We begin with the raw amino-acid sequence, 1213 residues long: DNA-directed RNA polymerase subunit beta' (1213 aa).

Positions 60, 62, 75, and 78 each coordinate Zn(2+). Positions 450, 452, and 454 each coordinate Mg(2+). C819, C893, C900, and C903 together coordinate Zn(2+).

This sequence belongs to the RNA polymerase beta' chain family. The RNAP catalytic core consists of 2 alpha, 1 beta, 1 beta' and 1 omega subunit. When a sigma factor is associated with the core the holoenzyme is formed, which can initiate transcription. The cofactor is Mg(2+). Zn(2+) is required as a cofactor.

The enzyme catalyses RNA(n) + a ribonucleoside 5'-triphosphate = RNA(n+1) + diphosphate. Functionally, DNA-dependent RNA polymerase catalyzes the transcription of DNA into RNA using the four ribonucleoside triphosphates as substrates. This chain is DNA-directed RNA polymerase subunit beta', found in Streptococcus pyogenes serotype M18 (strain MGAS8232).